The sequence spans 58 residues: MAVPKRKTSKSNTKMRRAANSKMEATGFVSCPQCHEPKLPHRVCPDCGYYKGKEVVSK.

Residues 1–19 (MAVPKRKTSKSNTKMRRAA) are compositionally biased toward basic residues. Positions 1–22 (MAVPKRKTSKSNTKMRRAANSK) are disordered.

The protein belongs to the bacterial ribosomal protein bL32 family.

The polypeptide is Large ribosomal subunit protein bL32 (Clostridioides difficile (strain 630) (Peptoclostridium difficile)).